Consider the following 183-residue polypeptide: Threonylcarbamoyl-AMP synthase (183 aa).

One can recognise a YrdC-like domain in the interval 1 to 183 (MNITQIIEKL…LFTNQLVRQG (183 aa)).

The protein belongs to the SUA5 family. TsaC subfamily.

The protein localises to the cytoplasm. It catalyses the reaction L-threonine + hydrogencarbonate + ATP = L-threonylcarbamoyladenylate + diphosphate + H2O. In terms of biological role, required for the formation of a threonylcarbamoyl group on adenosine at position 37 (t(6)A37) in tRNAs that read codons beginning with adenine. Catalyzes the conversion of L-threonine, HCO(3)(-)/CO(2) and ATP to give threonylcarbamoyl-AMP (TC-AMP) as the acyladenylate intermediate, with the release of diphosphate. The polypeptide is Threonylcarbamoyl-AMP synthase (Histophilus somni (strain 129Pt) (Haemophilus somnus)).